The sequence spans 433 residues: Pyrimidine-nucleoside phosphorylase (433 aa).

81 to 83 (KHS) is a phosphate binding site. Residues glycine 88 and threonine 90 each coordinate K(+). Residues threonine 92, 108–110 (KMS), and threonine 120 each bind phosphate. Arginine 168 and lysine 187 together coordinate substrate. Residues leucine 243, alanine 246, and glutamate 255 each contribute to the K(+) site.

It belongs to the thymidine/pyrimidine-nucleoside phosphorylase family. As to quaternary structure, homodimer. The cofactor is K(+).

It catalyses the reaction uridine + phosphate = alpha-D-ribose 1-phosphate + uracil. The enzyme catalyses thymidine + phosphate = 2-deoxy-alpha-D-ribose 1-phosphate + thymine. It carries out the reaction 2'-deoxyuridine + phosphate = 2-deoxy-alpha-D-ribose 1-phosphate + uracil. In terms of biological role, catalyzes phosphorolysis of the pyrimidine nucleosides uridine, thymidine and 2'-deoxyuridine with the formation of the corresponding pyrimidine base and ribose-1-phosphate. The polypeptide is Pyrimidine-nucleoside phosphorylase (pdp) (Staphylococcus epidermidis (strain ATCC 35984 / DSM 28319 / BCRC 17069 / CCUG 31568 / BM 3577 / RP62A)).